A 1058-amino-acid chain; its full sequence is MPKRTDIQKIMVIGSGPIIIGQAAEFDYAGTQACLSLKEEGYEVVLVNSNPATIMTDKEIADKVYIEPITLEFVTRILRKERPDALLPTLGGQTGLNMAMELSKNGILDELGVEFLGTRLSAIDQAEDRDLFKQLMEELEQPIPESEIVNTVEEAIAFAATIGYPVIVRPAFTLGGTGGGMCANEKELREITENGLKLSPVTQCLIERSIAGFKEIEYEVMRDSADNALVVCNMENFDPVGIHTGDSIVFAPAQTMSDYENQMLRDASLSIIRALKIEGGCNVQLALDPNSFKYYVIEVNPRVSRSSALASKATGYPIAKLAAKIAVGLTLDEVINPVTGSTYAMFEPALDYVVAKIPRFPFDKFEKGERRLGTQMKATGEVMAIGRNIEESLLKACRSLEIGVHHNEIPELAAVSDDALIEKVVKAQDDRLFYVSEAIRRGYTPEEIAELTKIDIFYLDKLLHIFEIEQELGAHPQDLEVLKTAKLNGFSDRKIAELWGTTDDQVRQLRLENKIVPVYKMVDTCAAEFDSETPYFYSTYGWENESIRSDKESVLVLGSGPIRIGQGVEFDYATVHSVKAIQAAGYEAIIMNSNPETVSTDFSVSDKLYFEPLTFEDVMNVIDLEQPKGVIVQFGGQTAINLAEPLAKAGVTILGTQVADLDRAEDRDLFEQALKELDIPQPPGQTATNEEEAALAARKIGFPVLVRPSYVLGGRAMEIVENEEDLRSYMRTAVKASPDHPVLVDSYIVGQECEVDAISDGKNVLIPGIMEHIERAGVHSGDSMAVYPPQTLSQKVQETIADYTKRLAIGLHCLGMMNIQFVIKDEKVYVIEVNPRASRTVPFLSKVTNIPMAQVATKLILGQSLSELGYQNGLYPESTRVHIKAPVFSFTKLAKVDSLLGPEMKSTGEVMGSDATLEKALYKAFEASYLHLPTFGNVVFTIADDAKEEALNLARRFQNIGYGILATEGTAAFFASHGLQAQPVGKIGDDDKDIPSFVRKGRIQAIINTVGTKRTADEDGEQIRRSAIEHGVPLFTALDTANAMLKVLESRSFVTEAI.

Positions 1–401 (MPKRTDIQKI…SLLKACRSLE (401 aa)) are carboxyphosphate synthetic domain. ATP contacts are provided by R129, R169, G175, G176, R208, I210, E215, G241, I242, H243, Q284, and E298. The region spanning 133–327 (KQLMEELEQP…IAKLAAKIAV (195 aa)) is the ATP-grasp 1 domain. Q284, E298, and N300 together coordinate Mg(2+). Mn(2+)-binding residues include Q284, E298, and N300. Residues 402-546 (IGVHHNEIPE…YSTYGWENES (145 aa)) are oligomerization domain. Residues 547-929 (IRSDKESVLV…ALYKAFEASY (383 aa)) form a carbamoyl phosphate synthetic domain region. The ATP-grasp 2 domain occupies 671-861 (EQALKELDIP…MAQVATKLIL (191 aa)). Residues R707, S746, I748, E752, G777, V778, H779, S780, Q820, and E832 each coordinate ATP. Mg(2+)-binding residues include Q820, E832, and N834. Residues Q820, E832, and N834 each contribute to the Mn(2+) site. The 129-residue stretch at 930-1058 (LHLPTFGNVV…ESRSFVTEAI (129 aa)) folds into the MGS-like domain. The interval 930–1058 (LHLPTFGNVV…ESRSFVTEAI (129 aa)) is allosteric domain.

Belongs to the CarB family. Composed of two chains; the small (or glutamine) chain promotes the hydrolysis of glutamine to ammonia, which is used by the large (or ammonia) chain to synthesize carbamoyl phosphate. Tetramer of heterodimers (alpha,beta)4. Mg(2+) is required as a cofactor. The cofactor is Mn(2+).

The enzyme catalyses hydrogencarbonate + L-glutamine + 2 ATP + H2O = carbamoyl phosphate + L-glutamate + 2 ADP + phosphate + 2 H(+). The catalysed reaction is hydrogencarbonate + NH4(+) + 2 ATP = carbamoyl phosphate + 2 ADP + phosphate + 2 H(+). It functions in the pathway amino-acid biosynthesis; L-arginine biosynthesis; carbamoyl phosphate from bicarbonate: step 1/1. The protein operates within pyrimidine metabolism; UMP biosynthesis via de novo pathway; (S)-dihydroorotate from bicarbonate: step 1/3. Large subunit of the glutamine-dependent carbamoyl phosphate synthetase (CPSase). CPSase catalyzes the formation of carbamoyl phosphate from the ammonia moiety of glutamine, carbonate, and phosphate donated by ATP, constituting the first step of 2 biosynthetic pathways, one leading to arginine and/or urea and the other to pyrimidine nucleotides. The large subunit (synthetase) binds the substrates ammonia (free or transferred from glutamine from the small subunit), hydrogencarbonate and ATP and carries out an ATP-coupled ligase reaction, activating hydrogencarbonate by forming carboxy phosphate which reacts with ammonia to form carbamoyl phosphate. The protein is Carbamoyl phosphate synthase large chain of Streptococcus pneumoniae (strain Hungary19A-6).